The following is a 180-amino-acid chain: Geminin homolog (180 aa).

A compositionally biased stretch (polar residues) spans 1 to 27; it reads MSRIGLQQLNNSARNSPFGSEKATGTK. The disordered stretch occupies residues 1 to 29; the sequence is MSRIGLQQLNNSARNSPFGSEKATGTKQI.

This sequence belongs to the geminin family. As to quaternary structure, homodimer. Interacts with cdt-1; the interaction most likely inhibits the ability of cdt-1 to load the mini-chromosome maintenance (MCM) complex onto DNA and therefore reduces DNA replication licensing activity. Interacts with nob-1 and ceh-32.

The protein localises to the cytoplasm. The protein resides in the nucleus. Its function is as follows. Inhibits DNA replication by binding to the DNA replication licensing factor cdt-1. Its interaction with cdt-1 prevents the cdt-1 loading of the mini-chromosome maintenance (MCM) complex onto DNA and therefore DNA replication licencing. In Caenorhabditis elegans, this protein is Geminin homolog.